The chain runs to 133 residues: Large ribosomal subunit protein bL17 (133 aa).

This sequence belongs to the bacterial ribosomal protein bL17 family. Part of the 50S ribosomal subunit. Contacts protein L32.

The protein is Large ribosomal subunit protein bL17 of Ehrlichia chaffeensis (strain ATCC CRL-10679 / Arkansas).